The following is a 105-amino-acid chain: Putative pterin-4-alpha-carbinolamine dehydratase (105 aa).

It belongs to the pterin-4-alpha-carbinolamine dehydratase family.

The catalysed reaction is (4aS,6R)-4a-hydroxy-L-erythro-5,6,7,8-tetrahydrobiopterin = (6R)-L-erythro-6,7-dihydrobiopterin + H2O. The protein is Putative pterin-4-alpha-carbinolamine dehydratase of Sinorhizobium fredii (strain NBRC 101917 / NGR234).